The following is a 339-amino-acid chain: D-erythrose-4-phosphate dehydrogenase (339 aa).

NAD(+) is bound by residues 12–13 (RI) and Arg-81. Residues 154–156 (SCT), Arg-200, 213–214 (TK), and Arg-236 each bind substrate. Cys-155 serves as the catalytic Nucleophile. Asn-318 is an NAD(+) binding site.

It belongs to the glyceraldehyde-3-phosphate dehydrogenase family. Epd subfamily. Homotetramer.

It localises to the cytoplasm. The catalysed reaction is D-erythrose 4-phosphate + NAD(+) + H2O = 4-phospho-D-erythronate + NADH + 2 H(+). It participates in cofactor biosynthesis; pyridoxine 5'-phosphate biosynthesis; pyridoxine 5'-phosphate from D-erythrose 4-phosphate: step 1/5. Catalyzes the NAD-dependent conversion of D-erythrose 4-phosphate to 4-phosphoerythronate. The polypeptide is D-erythrose-4-phosphate dehydrogenase (Escherichia coli O45:K1 (strain S88 / ExPEC)).